The following is a 252-amino-acid chain: Ureidoacrylate amidohydrolase RutB (252 aa).

Residues 1–14 (MSTPARNTTLTSNT) show a composition bias toward polar residues. Residues 1-31 (MSTPARNTTLTSNTPAGAPRLPGAPAPQVLP) form a disordered region. Residues 15–27 (PAGAPRLPGAPAP) show a composition bias toward low complexity. The active-site Proton acceptor is the Asp-50. Lys-159 is a catalytic residue. Cys-192 acts as the Nucleophile in catalysis.

This sequence belongs to the isochorismatase family. RutB subfamily.

The enzyme catalyses (Z)-3-ureidoacrylate + H2O + H(+) = (Z)-3-aminoacrylate + NH4(+) + CO2. It carries out the reaction (Z)-3-ureidoacrylate + H2O = (Z)-3-aminoacrylate + carbamate + H(+). It catalyses the reaction (Z)-2-methylureidoacrylate + H2O + H(+) = (Z)-2-methylaminoacrylate + NH4(+) + CO2. Hydrolyzes ureidoacrylate to form aminoacrylate and carbamate. The carbamate hydrolyzes spontaneously, thereby releasing one of the nitrogen atoms of the pyrimidine ring as ammonia and one of its carbon atoms as CO2. The chain is Ureidoacrylate amidohydrolase RutB from Variovorax paradoxus (strain S110).